We begin with the raw amino-acid sequence, 395 residues long: Putative transcription factor 079L (395 aa).

It belongs to the IIV-6 282R family.

In terms of biological role, transcription activation. The chain is Putative transcription factor 079L from Aedes vexans (Inland floodwater mosquito).